The following is a 25-amino-acid chain: Inorganic pyrophosphatase (25 aa).

In terms of assembly, monomer. It depends on Mg(2+) as a cofactor.

The enzyme catalyses diphosphate + H2O = 2 phosphate + H(+). This chain is Inorganic pyrophosphatase, found in Cyanophora paradoxa.